The following is a 100-amino-acid chain: Urease subunit gamma (100 aa).

The protein belongs to the urease gamma subunit family. As to quaternary structure, heterotrimer of UreA (gamma), UreB (beta) and UreC (alpha) subunits. Three heterotrimers associate to form the active enzyme.

It localises to the cytoplasm. It catalyses the reaction urea + 2 H2O + H(+) = hydrogencarbonate + 2 NH4(+). The protein operates within nitrogen metabolism; urea degradation; CO(2) and NH(3) from urea (urease route): step 1/1. In Actinobacillus pleuropneumoniae (Haemophilus pleuropneumoniae), this protein is Urease subunit gamma.